The following is a 101-amino-acid chain: Small ribosomal subunit protein uS14 (101 aa).

This sequence belongs to the universal ribosomal protein uS14 family. Part of the 30S ribosomal subunit. Contacts proteins S3 and S10.

In terms of biological role, binds 16S rRNA, required for the assembly of 30S particles and may also be responsible for determining the conformation of the 16S rRNA at the A site. This chain is Small ribosomal subunit protein uS14, found in Neorickettsia sennetsu (strain ATCC VR-367 / Miyayama) (Ehrlichia sennetsu).